A 417-amino-acid polypeptide reads, in one-letter code: Serine hydroxymethyltransferase (417 aa).

Residues Leu112 and 116-118 each bind (6S)-5,6,7,8-tetrahydrofolate; that span reads GHL. Lys221 carries the post-translational modification N6-(pyridoxal phosphate)lysine. Glu247 provides a ligand contact to (6S)-5,6,7,8-tetrahydrofolate.

This sequence belongs to the SHMT family. In terms of assembly, homodimer. The cofactor is pyridoxal 5'-phosphate.

It is found in the cytoplasm. It catalyses the reaction (6R)-5,10-methylene-5,6,7,8-tetrahydrofolate + glycine + H2O = (6S)-5,6,7,8-tetrahydrofolate + L-serine. It functions in the pathway one-carbon metabolism; tetrahydrofolate interconversion. Its pathway is amino-acid biosynthesis; glycine biosynthesis; glycine from L-serine: step 1/1. Catalyzes the reversible interconversion of serine and glycine with tetrahydrofolate (THF) serving as the one-carbon carrier. This reaction serves as the major source of one-carbon groups required for the biosynthesis of purines, thymidylate, methionine, and other important biomolecules. Also exhibits THF-independent aldolase activity toward beta-hydroxyamino acids, producing glycine and aldehydes, via a retro-aldol mechanism. The chain is Serine hydroxymethyltransferase from Borrelia hermsii (strain HS1 / DAH).